Here is a 207-residue protein sequence, read N- to C-terminus: BON1-associated protein 2 (207 aa).

The C2 domain maps to 1-112 (MSYSTFKRSL…GFAPQGHLNF (112 aa)).

As to quaternary structure, interacts with BON1, BON2 and BON3. As to expression, expressed in roots, leaves, stems and flowers.

Its subcellular location is the membrane. In terms of biological role, negative regulator of cell death and defense responses. Exhibits calcium-dependent phospholipid binding properties. The chain is BON1-associated protein 2 (BAP2) from Arabidopsis thaliana (Mouse-ear cress).